The chain runs to 118 residues: Large ribosomal subunit protein bL17 (118 aa).

The protein belongs to the bacterial ribosomal protein bL17 family. In terms of assembly, part of the 50S ribosomal subunit. Contacts protein L32.

This chain is Large ribosomal subunit protein bL17, found in Campylobacter fetus subsp. fetus (strain 82-40).